An 89-amino-acid chain; its full sequence is Phosphocarrier protein HPr (89 aa).

In terms of domain architecture, HPr spans 1-88; sequence MLQRDTTIIN…ALIANRFGEG (88 aa). The Pros-phosphohistidine intermediate role is filled by histidine 15.

Belongs to the HPr family.

Its subcellular location is the cytoplasm. Its function is as follows. General (non sugar-specific) component of the phosphoenolpyruvate-dependent sugar phosphotransferase system (sugar PTS). This major carbohydrate active-transport system catalyzes the phosphorylation of incoming sugar substrates concomitantly with their translocation across the cell membrane. The phosphoryl group from phosphoenolpyruvate (PEP) is transferred to the phosphoryl carrier protein HPr by enzyme I. Phospho-HPr then transfers it to the PTS EIIA domain. The polypeptide is Phosphocarrier protein HPr (phbH) (Cupriavidus necator (strain ATCC 17699 / DSM 428 / KCTC 22496 / NCIMB 10442 / H16 / Stanier 337) (Ralstonia eutropha)).